Reading from the N-terminus, the 77-residue chain is Putative sulfur carrier protein AF_0188 (77 aa).

Catalysis depends on C11, which acts as the Cysteine persulfide intermediate.

This sequence belongs to the sulfur carrier protein TusA family.

This is Putative sulfur carrier protein AF_0188 from Archaeoglobus fulgidus (strain ATCC 49558 / DSM 4304 / JCM 9628 / NBRC 100126 / VC-16).